The sequence spans 115 residues: Guanylin (115 aa).

Positions 1–21 are cleaved as a signal peptide; the sequence is MNAFLLSALCLLGAWAALAGG. Disulfide bonds link cysteine 69-cysteine 82, cysteine 104-cysteine 112, and cysteine 107-cysteine 115.

It belongs to the guanylin family. In terms of tissue distribution, highly expressed in ileum and colon. Found in plasma.

It is found in the secreted. Endogenous activator of intestinal guanylate cyclase. It stimulates this enzyme through the same receptor binding region as the heat-stable enterotoxins. In Homo sapiens (Human), this protein is Guanylin (GUCA2A).